The chain runs to 273 residues: Phosphate import ATP-binding protein PstB 1 (273 aa).

The region spanning 27-268 (ISIEHLSLYY…PLKKQTEDYI (242 aa)) is the ABC transporter domain. An ATP-binding site is contributed by 59-66 (GPSGCGKS).

Belongs to the ABC transporter superfamily. Phosphate importer (TC 3.A.1.7) family. As to quaternary structure, the complex is composed of two ATP-binding proteins (PstB), two transmembrane proteins (PstC and PstA) and a solute-binding protein (PstS).

It is found in the cell inner membrane. The catalysed reaction is phosphate(out) + ATP + H2O = ADP + 2 phosphate(in) + H(+). Its function is as follows. Part of the ABC transporter complex PstSACB involved in phosphate import. Responsible for energy coupling to the transport system. This is Phosphate import ATP-binding protein PstB 1 from Vibrio cholerae serotype O1 (strain ATCC 39315 / El Tor Inaba N16961).